The following is a 108-amino-acid chain: Cytochrome c oxidase subunit 1 (108 aa).

The helical transmembrane segment at 10–30 threads the bilayer; sequence AFVAPVLGLLGFIPGGAGGIV. His49 contributes to the heme a3 binding site. The next 2 membrane-spanning stretches (helical) occupy residues 50–70 and 85–105; these read FHLQ…YWLL and LGLA…VGLH. His51 provides a ligand contact to Fe(II)-heme a.

It belongs to the heme-copper respiratory oxidase family. Heme serves as cofactor. It depends on Cu cation as a cofactor.

Its subcellular location is the cell membrane. The catalysed reaction is 4 Fe(II)-[cytochrome c] + O2 + 8 H(+)(in) = 4 Fe(III)-[cytochrome c] + 2 H2O + 4 H(+)(out). The protein operates within energy metabolism; oxidative phosphorylation. This is Cytochrome c oxidase subunit 1 (cbaA) from Thermus thermophilus.